Reading from the N-terminus, the 652-residue chain is Carboxypeptidase Z (652 aa).

The signal sequence occupies residues 1–20 (MPTTPLLLAALAALAALAVA). Residues 41 to 163 (THSATCVDLH…APEEEGCYDP (123 aa)) enclose the FZ domain. 5 cysteine pairs are disulfide-bonded: C46–C112, C54–C105, C96–C132, C121–C160, and C125–C149. N60 carries an N-linked (GlcNAc...) asparagine glycan. The 317-residue stretch at 189-505 (AHHSYAQMVR…EPLLNFLEMV (317 aa)) folds into the Peptidase M14 domain. Zn(2+) contacts are provided by H251 and E254. The N-linked (GlcNAc...) asparagine glycan is linked to N284. H383 is a Zn(2+) binding site. Residue E475 is the Proton donor/acceptor of the active site. The tract at residues 594–628 (FLPGPSRALPRSLDPQGAPAQLDFEPPRARRQPAS) is disordered.

Belongs to the peptidase M14 family. Requires Zn(2+) as cofactor. In terms of tissue distribution, abundantly expressed in the placenta, with low to moderate levels in the brain, lung, thymus and kidney.

The protein resides in the secreted. Its subcellular location is the extracellular space. The protein localises to the extracellular matrix. Its activity is regulated as follows. Inhibited by 2-mercaptomethyl-3-guanidinoethylthiopropanoic acid (MGTA) and guanidinoethylmercaptosuccinic acid (GEMSA). Inhibited by chelating agents such as EDTA and EGTA. In terms of biological role, cleaves substrates with C-terminal arginine residues. Probably modulates the Wnt signaling pathway, by cleaving some undefined protein. May play a role in cleavage during prohormone processing. The sequence is that of Carboxypeptidase Z (Cpz) from Rattus norvegicus (Rat).